The following is a 452-amino-acid chain: Nebulette (452 aa).

A disordered region spans residues Met1 to Ala26. The segment covering Glu11 to Asn23 has biased composition (acidic residues). 12 Nebulin repeats span residues Ser29–Asp63, Lys64–Ser98, Leu101–Gly135, Asp138–Thr172, Tyr173–Lys199, Lys206–Lys240, Leu263–Gly278, Leu279–Gly313, Ser315–Lys349, Ser352–Lys386, Gly389–Lys423, and Gly426–Val452.

As to quaternary structure, interacts (via nebulin repeats 1-5) with DESM (via rod region). Interacts (via SH3 domain) with XIRP2.

The protein resides in the cytoplasm. Functionally, binds to actin and plays an important role in the assembly of the Z-disk. May functionally link sarcomeric actin to the desmin intermediate filaments in the heart muscle sarcomeres. Isoform 2 might play a role in the assembly of focal adhesion. The chain is Nebulette (Nebl) from Mus musculus (Mouse).